The primary structure comprises 342 residues: Isopentenyl-diphosphate delta-isomerase (342 aa).

A substrate-binding site is contributed by 11–12 (RK). FMN-binding positions include serine 68, 69-71 (SMT), serine 99, and asparagine 128. 99–101 (SQR) contributes to the substrate binding site. Glutamine 162 is a binding site for substrate. Position 163 (glutamate 163) interacts with Mg(2+). Residues lysine 194, serine 219, threonine 224, 275-277 (GVR), and 296-297 (AK) contribute to the FMN site.

The protein belongs to the IPP isomerase type 2 family. As to quaternary structure, homooctamer. Dimer of tetramers. FMN serves as cofactor. The cofactor is NADPH. It depends on Mg(2+) as a cofactor.

Its subcellular location is the cytoplasm. It catalyses the reaction isopentenyl diphosphate = dimethylallyl diphosphate. Its function is as follows. Involved in the biosynthesis of isoprenoids. Catalyzes the 1,3-allylic rearrangement of the homoallylic substrate isopentenyl (IPP) to its allylic isomer, dimethylallyl diphosphate (DMAPP). In Legionella pneumophila subsp. pneumophila (strain Philadelphia 1 / ATCC 33152 / DSM 7513), this protein is Isopentenyl-diphosphate delta-isomerase.